The sequence spans 554 residues: Glucose-6-phosphate isomerase (554 aa).

Catalysis depends on glutamate 358, which acts as the Proton donor. Catalysis depends on residues histidine 389 and lysine 515.

Belongs to the GPI family.

It is found in the cytoplasm. It carries out the reaction alpha-D-glucose 6-phosphate = beta-D-fructose 6-phosphate. Its pathway is carbohydrate biosynthesis; gluconeogenesis. The protein operates within carbohydrate degradation; glycolysis; D-glyceraldehyde 3-phosphate and glycerone phosphate from D-glucose: step 2/4. Functionally, catalyzes the reversible isomerization of glucose-6-phosphate to fructose-6-phosphate. This chain is Glucose-6-phosphate isomerase, found in Mycobacterium leprae (strain Br4923).